The following is a 122-amino-acid chain: Basic phospholipase A2 LmTX-II (122 aa).

6 disulfide bridges follow: C26/C115, C28/C44, C43/C95, C49/C122, C50/C88, and C75/C86. Residues Y27, G29, and G31 each contribute to the Ca(2+) site. H47 is an active-site residue. D48 lines the Ca(2+) pocket. The active site involves D89.

Monomer. It depends on Ca(2+) as a cofactor. As to expression, expressed by the venom gland.

It localises to the secreted. It catalyses the reaction a 1,2-diacyl-sn-glycero-3-phosphocholine + H2O = a 1-acyl-sn-glycero-3-phosphocholine + a fatty acid + H(+). Functionally, snake venom phospholipase A2 (PLA2) that may display neurotoxic and myotoxic activities. May induce inflammatory edema by mechanisms involving mast cell activation and arachidonic acid metabolites. May increase plasma creatine kinase activity. PLA2 catalyzes the calcium-dependent hydrolysis of the 2-acyl groups in 3-sn-phosphoglycerides. This is Basic phospholipase A2 LmTX-II from Lachesis muta muta (Bushmaster).